Here is a 142-residue protein sequence, read N- to C-terminus: uncharacterized protein (142 aa).

It belongs to the IIV-6 115R family.

This is an uncharacterized protein from Invertebrate iridescent virus 3 (IIV-3).